The chain runs to 396 residues: Tryptophan synthase beta chain (396 aa).

Lys88 carries the N6-(pyridoxal phosphate)lysine modification.

The protein belongs to the TrpB family. Tetramer of two alpha and two beta chains. It depends on pyridoxal 5'-phosphate as a cofactor.

It catalyses the reaction (1S,2R)-1-C-(indol-3-yl)glycerol 3-phosphate + L-serine = D-glyceraldehyde 3-phosphate + L-tryptophan + H2O. It functions in the pathway amino-acid biosynthesis; L-tryptophan biosynthesis; L-tryptophan from chorismate: step 5/5. Functionally, the beta subunit is responsible for the synthesis of L-tryptophan from indole and L-serine. In Shewanella sp. (strain MR-7), this protein is Tryptophan synthase beta chain.